Consider the following 493-residue polypeptide: Lysine--tRNA ligase (493 aa).

Residues Glu406 and Glu413 each contribute to the Mg(2+) site.

This sequence belongs to the class-II aminoacyl-tRNA synthetase family. Homodimer. The cofactor is Mg(2+).

Its subcellular location is the cytoplasm. The catalysed reaction is tRNA(Lys) + L-lysine + ATP = L-lysyl-tRNA(Lys) + AMP + diphosphate. The protein is Lysine--tRNA ligase of Leuconostoc citreum (strain KM20).